The sequence spans 360 residues: MAIKRSGNSDRPAKNPSSTPGTNAPTLLSPTPTHQEKETSEEKIRPHRLEDYIGQKDLKSILAIAMEAAKTRQDSLDHLLLYGPPGLGKTTISLILASEMGVNCKITAAPALERPRDITGLLINLKPGDILFIDEIHRLNRLTEELLYPAMEDYRLDITIGKGKAARTQSIHLPKFTLIGATTKVGALTSPLRDRFGLIQRLRFYEVDELTLIVLRTAQILDTAVTEEGATEIARRSRGTPRIANRLLRRVRDYMQVKNGTTIDQELASEALDIYQVDKQGLDWIDRLILETMINQFKGGPVGLEAIAASTGEDAKTIEEVYEPYLLQIGFLNRTPRGRVVSAVAYQHLGLTSEEQLSIF.

A disordered region spans residues 1-46; sequence MAIKRSGNSDRPAKNPSSTPGTNAPTLLSPTPTHQEKETSEEKIRP. The tract at residues 13–205 is large ATPase domain (RuvB-L); sequence AKNPSSTPGT…FGLIQRLRFY (193 aa). Residues 15–33 are compositionally biased toward polar residues; the sequence is NPSSTPGTNAPTLLSPTPT. Over residues 34–46 the composition is skewed to basic and acidic residues; it reads HQEKETSEEKIRP. ATP is bound by residues I44, R45, G86, K89, T90, T91, 152–154, R195, Y205, and R242; that span reads EDY. T90 is a Mg(2+) binding site. The small ATPAse domain (RuvB-S) stretch occupies residues 206-276; sequence EVDELTLIVL…LASEALDIYQ (71 aa). Residues 279-360 are head domain (RuvB-H); sequence KQGLDWIDRL…LTSEEQLSIF (82 aa). Positions 334 and 339 each coordinate DNA.

This sequence belongs to the RuvB family. In terms of assembly, homohexamer. Forms an RuvA(8)-RuvB(12)-Holliday junction (HJ) complex. HJ DNA is sandwiched between 2 RuvA tetramers; dsDNA enters through RuvA and exits via RuvB. An RuvB hexamer assembles on each DNA strand where it exits the tetramer. Each RuvB hexamer is contacted by two RuvA subunits (via domain III) on 2 adjacent RuvB subunits; this complex drives branch migration. In the full resolvosome a probable DNA-RuvA(4)-RuvB(12)-RuvC(2) complex forms which resolves the HJ.

Its subcellular location is the cytoplasm. The catalysed reaction is ATP + H2O = ADP + phosphate + H(+). Its function is as follows. The RuvA-RuvB-RuvC complex processes Holliday junction (HJ) DNA during genetic recombination and DNA repair, while the RuvA-RuvB complex plays an important role in the rescue of blocked DNA replication forks via replication fork reversal (RFR). RuvA specifically binds to HJ cruciform DNA, conferring on it an open structure. The RuvB hexamer acts as an ATP-dependent pump, pulling dsDNA into and through the RuvAB complex. RuvB forms 2 homohexamers on either side of HJ DNA bound by 1 or 2 RuvA tetramers; 4 subunits per hexamer contact DNA at a time. Coordinated motions by a converter formed by DNA-disengaged RuvB subunits stimulates ATP hydrolysis and nucleotide exchange. Immobilization of the converter enables RuvB to convert the ATP-contained energy into a lever motion, pulling 2 nucleotides of DNA out of the RuvA tetramer per ATP hydrolyzed, thus driving DNA branch migration. The RuvB motors rotate together with the DNA substrate, which together with the progressing nucleotide cycle form the mechanistic basis for DNA recombination by continuous HJ branch migration. Branch migration allows RuvC to scan DNA until it finds its consensus sequence, where it cleaves and resolves cruciform DNA. This Rippkaea orientalis (strain PCC 8801 / RF-1) (Cyanothece sp. (strain PCC 8801)) protein is Holliday junction branch migration complex subunit RuvB.